The sequence spans 465 residues: tRNA-2-methylthio-N(6)-dimethylallyladenosine synthase (465 aa).

The 116-residue stretch at 26–141 folds into the MTTase N-terminal domain; that stretch reads MRAHIITYGC…LPEALKANER (116 aa). Residues Cys-35, Cys-71, Cys-104, Cys-173, Cys-177, and Cys-180 each coordinate [4Fe-4S] cluster. The Radical SAM core domain occupies 159–388; the sequence is PKGALSAHVT…IEKQKEWSYR (230 aa). The region spanning 391-453 is the TRAM domain; the sequence is LEWVGKTVEV…PHLLFGEVVG (63 aa).

This sequence belongs to the methylthiotransferase family. MiaB subfamily. Monomer. [4Fe-4S] cluster serves as cofactor.

The protein resides in the cytoplasm. It carries out the reaction N(6)-dimethylallyladenosine(37) in tRNA + (sulfur carrier)-SH + AH2 + 2 S-adenosyl-L-methionine = 2-methylsulfanyl-N(6)-dimethylallyladenosine(37) in tRNA + (sulfur carrier)-H + 5'-deoxyadenosine + L-methionine + A + S-adenosyl-L-homocysteine + 2 H(+). Its function is as follows. Catalyzes the methylthiolation of N6-(dimethylallyl)adenosine (i(6)A), leading to the formation of 2-methylthio-N6-(dimethylallyl)adenosine (ms(2)i(6)A) at position 37 in tRNAs that read codons beginning with uridine. This Thermus thermophilus (strain ATCC BAA-163 / DSM 7039 / HB27) protein is tRNA-2-methylthio-N(6)-dimethylallyladenosine synthase.